We begin with the raw amino-acid sequence, 638 residues long: 1-deoxy-D-xylulose-5-phosphate synthase (638 aa).

Residues histidine 74 and 115 to 117 contribute to the thiamine diphosphate site; that span reads GHS. Mg(2+) is bound at residue aspartate 146. Thiamine diphosphate is bound by residues 147-148, asparagine 175, tyrosine 286, and glutamate 366; that span reads GA. Asparagine 175 contacts Mg(2+).

This sequence belongs to the transketolase family. DXPS subfamily. In terms of assembly, homodimer. Mg(2+) is required as a cofactor. Thiamine diphosphate serves as cofactor.

It catalyses the reaction D-glyceraldehyde 3-phosphate + pyruvate + H(+) = 1-deoxy-D-xylulose 5-phosphate + CO2. It participates in metabolic intermediate biosynthesis; 1-deoxy-D-xylulose 5-phosphate biosynthesis; 1-deoxy-D-xylulose 5-phosphate from D-glyceraldehyde 3-phosphate and pyruvate: step 1/1. Functionally, catalyzes the acyloin condensation reaction between C atoms 2 and 3 of pyruvate and glyceraldehyde 3-phosphate to yield 1-deoxy-D-xylulose-5-phosphate (DXP). This chain is 1-deoxy-D-xylulose-5-phosphate synthase, found in Syntrophomonas wolfei subsp. wolfei (strain DSM 2245B / Goettingen).